The sequence spans 437 residues: MKPLIALVGRPNVGKSTLFNRILRQKSAIVDSTPGVTRDRHIMPGEWQGKQFLLMDTGGYCAANDVISSSMIEQTLTAIRDADCVIFLTDVRSGLTYDDLEISKLLQRTFQNKQIFFAVNKVESPQLTIDAESFVSTGFTRPYFLSAKDGSGVADMLDDILESLPESEHTDDDEDTSVKLAVVGRPNVGKSSFVNALLGTNRHIVSDIPGTTRDAIDSRFIRKQQEYVLIDTAGLRKRTKIDAGVEFYSSLRTEKAIERCQVAVVLLDARAGLEKQDLKIINMAEERKKGVLLLVNKWDLIEKDSKTSKIYEDDLRSHMGNLSWIPVLFISALTKKNLYRAIDTAEEISRNRSRKISTSSLNRFLEEALSAVHPSTKSGKELKIKYMTQIDSHWPVFAFFCNNPELVQSNFRKFLEKKLREQFQLDGVPISLRFMEK.

2 consecutive EngA-type G domains span residues 3-168 (PLIA…PESE) and 178-353 (VKLA…RNRS). Residues 9 to 16 (GRPNVGKS), 56 to 60 (DTGGY), 120 to 123 (NKVE), 184 to 191 (GRPNVGKS), 231 to 235 (DTAGL), and 296 to 299 (NKWD) contribute to the GTP site. The KH-like domain maps to 354-437 (RKISTSSLNR…VPISLRFMEK (84 aa)).

The protein belongs to the TRAFAC class TrmE-Era-EngA-EngB-Septin-like GTPase superfamily. EngA (Der) GTPase family. Associates with the 50S ribosomal subunit.

Functionally, GTPase that plays an essential role in the late steps of ribosome biogenesis. This chain is GTPase Der, found in Chlorobium limicola (strain DSM 245 / NBRC 103803 / 6330).